Reading from the N-terminus, the 103-residue chain is Large ribosomal subunit protein uL24 (103 aa).

The protein belongs to the universal ribosomal protein uL24 family. In terms of assembly, part of the 50S ribosomal subunit.

In terms of biological role, one of two assembly initiator proteins, it binds directly to the 5'-end of the 23S rRNA, where it nucleates assembly of the 50S subunit. Functionally, one of the proteins that surrounds the polypeptide exit tunnel on the outside of the subunit. This chain is Large ribosomal subunit protein uL24, found in Actinobacillus pleuropneumoniae serotype 3 (strain JL03).